Reading from the N-terminus, the 600-residue chain is Xylulose kinase (600 aa).

Substrate is bound at residue Trp-79 to Ala-82. A Phosphoserine modification is found at Ser-244. Residue Asp-299 coordinates substrate. Residues Gly-358 and Gly-505 to Asn-509 each bind ATP.

This sequence belongs to the FGGY kinase family.

It localises to the cytoplasm. The catalysed reaction is D-xylulose + ATP = D-xylulose 5-phosphate + ADP + H(+). Functionally, xylulose kinase necessary for growth in culture media with D-xylulose as the solecarbon source. The protein is Xylulose kinase of Saccharomyces cerevisiae (strain ATCC 204508 / S288c) (Baker's yeast).